Consider the following 130-residue polypeptide: Small ribosomal subunit protein uS9 (130 aa).

It belongs to the universal ribosomal protein uS9 family.

The polypeptide is Small ribosomal subunit protein uS9 (Nitrosomonas eutropha (strain DSM 101675 / C91 / Nm57)).